Consider the following 262-residue polypeptide: Tropinone reductase homolog At2g29290 (262 aa).

Leu-13–His-37 contributes to the NADP(+) binding site. Ser-146 is a substrate binding site. Tyr-159 acts as the Proton acceptor in catalysis.

This sequence belongs to the short-chain dehydrogenases/reductases (SDR) family. SDR65C subfamily.

In Arabidopsis thaliana (Mouse-ear cress), this protein is Tropinone reductase homolog At2g29290.